The primary structure comprises 208 residues: Protein GrpE (208 aa).

Basic and acidic residues predominate over residues 1 to 27; sequence MERMNQSRKVPIHDAAEESSAEAHETQ. Residues 1–65 form a disordered region; sequence MERMNQSRKV…AEEAQEEEAA (65 aa). Acidic residues predominate over residues 45-64; that stretch reads MAEEAVEQAQDAEEAQEEEA.

It belongs to the GrpE family. In terms of assembly, homodimer.

It is found in the cytoplasm. Functionally, participates actively in the response to hyperosmotic and heat shock by preventing the aggregation of stress-denatured proteins, in association with DnaK and GrpE. It is the nucleotide exchange factor for DnaK and may function as a thermosensor. Unfolded proteins bind initially to DnaJ; upon interaction with the DnaJ-bound protein, DnaK hydrolyzes its bound ATP, resulting in the formation of a stable complex. GrpE releases ADP from DnaK; ATP binding to DnaK triggers the release of the substrate protein, thus completing the reaction cycle. Several rounds of ATP-dependent interactions between DnaJ, DnaK and GrpE are required for fully efficient folding. The polypeptide is Protein GrpE (Desulfatibacillum aliphaticivorans).